A 73-amino-acid chain; its full sequence is Small ribosomal subunit protein bS18 (73 aa).

It belongs to the bacterial ribosomal protein bS18 family. In terms of assembly, part of the 30S ribosomal subunit. Forms a tight heterodimer with protein bS6.

In terms of biological role, binds as a heterodimer with protein bS6 to the central domain of the 16S rRNA, where it helps stabilize the platform of the 30S subunit. The chain is Small ribosomal subunit protein bS18 from Prochlorococcus marinus (strain MIT 9313).